The sequence spans 140 residues: Translation initiation factor 2 subunit beta (140 aa).

This sequence belongs to the eIF-2-beta/eIF-5 family. In terms of assembly, heterotrimer composed of an alpha, a beta and a gamma chain.

EIF-2 functions in the early steps of protein synthesis by forming a ternary complex with GTP and initiator tRNA. The chain is Translation initiation factor 2 subunit beta from Metallosphaera sedula (strain ATCC 51363 / DSM 5348 / JCM 9185 / NBRC 15509 / TH2).